A 354-amino-acid chain; its full sequence is Zinc finger protein 346 (354 aa).

4 consecutive Matrin-type zinc fingers follow at residues Thr-34–Arg-64, Lys-95–Leu-125, Lys-165–Lys-195, and Phe-232–Ser-262. The Zn(2+) site is built by Cys-36, Cys-39, His-52, His-58, Cys-97, Cys-100, His-113, and His-119. The disordered stretch occupies residues Met-263 to Gly-343. Composition is skewed to low complexity over residues Gly-270–Ala-289 and Gly-310–Leu-323. Pro residues predominate over residues Met-324–Ser-333.

It is found in the nucleus. The protein localises to the cytoplasm. Functionally, binds preferentially to dsRNA, but also to RNA-DNA hybrids. This Xenopus tropicalis (Western clawed frog) protein is Zinc finger protein 346.